The primary structure comprises 284 residues: Tropomyosin Per a 7.0103 (284 aa).

Residues 1-266 adopt a coiled-coil conformation; it reads MDAIKKKMQA…EDELVHEKEK (266 aa).

Belongs to the tropomyosin family. As to quaternary structure, homodimer.

Tropomyosin, in association with the troponin complex, plays a central role in the calcium dependent regulation of muscle contraction. This chain is Tropomyosin Per a 7.0103, found in Periplaneta americana (American cockroach).